We begin with the raw amino-acid sequence, 170 residues long: Small ribosomal subunit protein uS5 (170 aa).

An S5 DRBM domain is found at 11-74 (ILEKLVHINR…ETARRVLIHV (64 aa)).

This sequence belongs to the universal ribosomal protein uS5 family. As to quaternary structure, part of the 30S ribosomal subunit. Contacts proteins S4 and S8.

In terms of biological role, with S4 and S12 plays an important role in translational accuracy. Functionally, located at the back of the 30S subunit body where it stabilizes the conformation of the head with respect to the body. The polypeptide is Small ribosomal subunit protein uS5 (Pelagibacter ubique (strain HTCC1062)).